A 71-amino-acid polypeptide reads, in one-letter code: Prophage lysis protein S homolog EssD (71 aa).

It belongs to the lambda phage S protein family.

This Escherichia coli (strain K12) protein is Prophage lysis protein S homolog EssD (essD).